Reading from the N-terminus, the 193-residue chain is Protein PrsJ (193 aa).

The signal sequence occupies residues methionine 1–alanine 27.

It localises to the periplasm. Its function is as follows. This protein maintains pilus integrity and thus is an important participant in pilus assembly. It may function as molecular chaperone directly or indirectly in the correct assembly of PapA subunits. This chain is Protein PrsJ (prsJ), found in Escherichia coli.